The sequence spans 117 residues: Modulator protein MzrA (117 aa).

Over Met1 to Ser11 the chain is Cytoplasmic. A helical transmembrane segment spans residues Ala12–Ser29. Topologically, residues Ser30–Ser117 are periplasmic.

The protein belongs to the MzrA family. Interacts with EnvZ.

The protein localises to the cell inner membrane. Its function is as follows. Modulates the activity of the EnvZ/OmpR two-component regulatory system, probably by directly modulating EnvZ enzymatic activity and increasing stability of phosphorylated OmpR. This chain is Modulator protein MzrA, found in Dickeya dadantii (strain 3937) (Erwinia chrysanthemi (strain 3937)).